Reading from the N-terminus, the 869-residue chain is H(+)/Cl(-) exchange transporter 6 (869 aa).

At 1 to 80 (MAGCRGSLCC…KKGRWYEVVK (80 aa)) the chain is on the cytoplasmic side. A run of 2 helical transmembrane segments spans residues 81–113 (WTVV…FGVV) and 128–150 (LSLL…LVLI). A Selectivity filter part_1 motif is present at residues 156–160 (GSGIP). Chloride is bound at residue serine 157. The helical intramembrane region spans 159 to 166 (IPEIKCYL). The next 2 membrane-spanning stretches (helical) occupy residues 176–194 (RLRT…VAGG) and 200–217 (EGPM…LPQF). The Selectivity filter part_2 motif lies at 198–202 (GKEGP). 2 consecutive intramembrane regions (helical) follow at residues 241–253 (FVSA…IAAA) and 257–265 (PIGATLFSL). 3 helical membrane-spanning segments follow: residues 277–294 (TWKV…LNFF), 335–364 (GFFV…YRMR), and 371–392 (KLVR…VFVA). Asparagine 410, asparagine 422, and asparagine 432 each carry an N-linked (GlcNAc...) asparagine glycan. 2 helical membrane-spanning segments follow: residues 462–481 (PITL…WTYG) and 487–511 (GLFV…KSYI). Positions 487–491 (GLFVP) match the Selectivity filter part_3 motif. Residue phenylalanine 489 coordinates chloride. The segment at residues 519–533 (GTFSLIGAAALLGGV) is an intramembrane region (helical). Residues 534–536 (VRM) constitute an intramembrane region (note=Loop between two helices). Residues 537-548 (TISLTVILIEST) constitute an intramembrane region (helical). The segment at residues 549 to 552 (NEIT) is an intramembrane region (note=Loop between two helices). Residues 553 to 571 (YGLPIMITLMVAKWTGDFF) traverse the membrane as a helical segment. Over 572-869 (NKGIYDIHVG…ARLRQHYQTI (298 aa)) the chain is Cytoplasmic. Tyrosine 576 is a binding site for chloride. In terms of domain architecture, CBS 1 spans 605-662 (MEPNLTYVYPHTRIQSLVSILRTTVHHAFPVVTENRGNEKEFMKGNQLISNNIKFKKS). 630–632 (HHA) is an ATP binding site. Residues 668-687 (AGEQRRRSQSMKSYPSSELR) are disordered. The segment covering 677–686 (SMKSYPSSEL) has biased composition (polar residues). Serine 773 is modified (phosphoserine). The 62-residue stretch at 807 to 868 (MNPSPFTVSP…QARLRQHYQT (62 aa)) folds into the CBS 2 domain. 849-852 (TRHN) contributes to the ATP binding site.

Belongs to the chloride channel (TC 2.A.49) family. ClC-6/CLCN6 subfamily. Post-translationally, N-glycosylated on several asparagine residues.

It localises to the late endosome membrane. The enzyme catalyses 2 chloride(in) + H(+)(out) = 2 chloride(out) + H(+)(in). Functionally, voltage-gated channel mediating the exchange of chloride ions against protons. Functions as antiporter and contributes to the acidification of the late endosome lumen. The CLC channel family contains both chloride channels and proton-coupled anion transporters that exchange chloride or another anion for protons. The presence of conserved gating glutamate residues is typical for family members that function as antiporters. This Oryctolagus cuniculus (Rabbit) protein is H(+)/Cl(-) exchange transporter 6 (CLCN6).